Reading from the N-terminus, the 291-residue chain is Dihydroorotate dehydrogenase A (fumarate) (291 aa).

FMN contacts are provided by residues Ser-18 and Lys-42–Ser-43. Residues Lys-42, Asn-66–Leu-70, and Asn-126 contribute to the substrate site. FMN is bound at residue Asn-126. The active-site Nucleophile is the Cys-129. The FMN site is built by Lys-164 and Ile-190. Asn-191 to Thr-192 lines the substrate pocket. FMN is bound by residues Gly-216, Gly-242–Gly-243, and Gly-264–Ser-265.

This sequence belongs to the dihydroorotate dehydrogenase family. Type 1 subfamily. In terms of assembly, homodimer. It depends on FMN as a cofactor.

The protein localises to the cytoplasm. It catalyses the reaction (S)-dihydroorotate + fumarate = orotate + succinate. Its pathway is pyrimidine metabolism; UMP biosynthesis via de novo pathway. Functionally, catalyzes the conversion of dihydroorotate to orotate with fumarate as the electron acceptor. The protein is Dihydroorotate dehydrogenase A (fumarate) (pyrD) of Lacticaseibacillus paracasei (strain ATCC 334 / BCRC 17002 / CCUG 31169 / CIP 107868 / KCTC 3260 / NRRL B-441) (Lactobacillus paracasei).